Reading from the N-terminus, the 174-residue chain is uncharacterized protein (174 aa).

The chain crosses the membrane as a helical span at residues 7 to 27; the sequence is LIILAIFTLWVGGFGYYLYLI.

Its subcellular location is the membrane. This is an uncharacterized protein from Rickettsia prowazekii (strain Madrid E).